We begin with the raw amino-acid sequence, 315 residues long: Replication factor C small subunit (315 aa).

G43–T50 contributes to the ATP binding site.

It belongs to the activator 1 small subunits family. RfcS subfamily. Heteromultimer composed of small subunits (RfcS) and large subunits (RfcL).

Functionally, part of the RFC clamp loader complex which loads the PCNA sliding clamp onto DNA. In Methanococcus maripaludis (strain C7 / ATCC BAA-1331), this protein is Replication factor C small subunit.